Here is an 828-residue protein sequence, read N- to C-terminus: MDDLRGFLRQAGQEFLNAAGEAAMGAAKDVVGSVINEIFIKKEADTKRVLPSIKNMRVLGEKSSSLGPYSEVQDYETILNSCLASGSLFEDPLFPASNESLQFSRRPDRHIEWLRPHEIAENPQFFVEGYSRFDVQQGELGDCWLLAATANLTQESNLFFRVIPAEQSFEENYAGIFHFRFWQYGKWVDVIIDDRLPTYNGELMYMHSTEKNEFWSALLEKAYAKLHGSYEALKGGSTCEAMEDFTGGVSEWYDLKEAPGNLFTILQKAAERNSMMGCSIEPDPNVTEAETPQGLIRGHAYSITKVCLIDIVTPNRQGKIPMIRMRNPWGNEAEWNGPWSDSSPEWRYIPEEQKAEIGLTFDRDGEFWMSFQDFLNHFDRVEICNLSPDSLTEDQQNSGKRKWEMSMYEGEWTPGVTAGGCRNFLDTFWHNPQYIITLVDPDEEDEEGQCTVIVALMQKNRRSKRNMGMECLTIGFAIYSLNDRELENRPQGLNFFRYKSSVGRSPHFINTREVCARFKLPPGHYLIVPSTFDPNEEGEFIIRVFSETQNNMEENDDHVGYGGKADTITPGFPTPKPIDPQKEGLRRLFDSIAGKDMEVDWMELKRILDHSMRDDLPKPVVFNRFSNNMAFETQAAGPGDDGAGACGLLSLICGPFLKGTPFEEQLGMNDQSNKRLIGDNPADGGPVTANAIVDETHGFSKDVCRSMVAMLDADKSGKLGFEEFETLLSEIAKWKAIFKVYDVENTGRVSGFQLREALNSAGYHLNNRVLNVLGHRYGSRDGKIAFDDFIMCAVKIKTYIDIFKERDTEKNETATFTLEEWIERTIYS.

One can recognise an EF-hand 1 domain in the interval 1-14 (MDDLRGFLRQAGQE). The Calpain catalytic domain occupies 88–387 (LFEDPLFPAS…FDRVEICNLS (300 aa)). Active-site residues include Cys-143, His-299, and Asn-327. A domain III region spans residues 388–557 (PDSLTEDQQN…TQNNMEENDD (170 aa)). A linker region spans residues 558–577 (HVGYGGKADTITPGFPTPKP). The tract at residues 578–828 (IDPQKEGLRR…EEWIERTIYS (251 aa)) is domain IV. EF-hand domains are found at residues 579-614 (DPQK…SMRD), 699-734 (FSKD…IAKW), 729-764 (SEIA…AGYH), and 764-799 (HLNN…IKTY). The Ca(2+) site is built by Asp-712, Asp-714, Ser-716, Lys-718, Glu-723, Asp-742, Thr-746, Arg-748, and Gln-753.

This sequence belongs to the peptidase C2 family. In terms of processing, undergoes calcium-dependent autolytic cleavage between Lys-54 and Asn-55, which is necessary for activation of the protein. As to expression, localized to the anterior and posterior embryonic poles just after fertilization. Becomes distributed around the polar buds and just below the pole cells of the posterior pole during cleavage cycles. During these nuclear divisions anterior localization disappears. Localized to actin caps that underlie the plasma membrane, immediately above each nucleus at cleavage cycles 8 and 9. Localized to a small set of nerve, midgut and blood cells in adults.

The protein resides in the cytoplasm. With respect to regulation, activated by millimolar concentrations of calcium, and by phosphatidylinositol 4,5-diphosphate, phosphatidylinositol 4-monophosphate, phosphatidylinositol and phosphatidic acid. In terms of biological role, calcium-regulated non-lysosomal thiol-protease. Involved in the organization of the actin-related cytoskeleton during embryogenesis. The polypeptide is Calpain-A (CalpA) (Drosophila melanogaster (Fruit fly)).